Reading from the N-terminus, the 97-residue chain is Mapk-regulated corepressor-interacting protein 1 (97 aa).

The disordered stretch occupies residues 1–30 (MTSSPVSRVVYNGKRNSSHRSPPNSSEIFT). Phosphoserine is present on S21. T30 is subject to Phosphothreonine. Y41 carries the post-translational modification Phosphotyrosine. The tract at residues 77–97 (TFRPIDLSDLKRRNTQDAKKS) is disordered. The short motif at 80–84 (PIDLS) is the PXDLS motif element. Residues 82 to 97 (DLSDLKRRNTQDAKKS) are compositionally biased toward basic and acidic residues.

This sequence belongs to the MCRIP family. As to quaternary structure, interacts (unphosphorylated form, via the PXDLS motif) with CTBP1, competitively inhibiting CTBP-ZEB1 interaction. Interacts with CTBP2. Interacts with MCRIP2. Interacts with DDX6. In terms of processing, phosphorylation by MAPK3/1 (ERK1/2) regulates MCRIP1 binding to CTBP(s).

It localises to the nucleus. Its subcellular location is the cytoplasm. It is found in the stress granule. Its function is as follows. The phosphorylation status of MCRIP1 functions as a molecular switch to regulate epithelial-mesenchymal transition. Unphosphorylated MCRIP1 binds to and inhibits the transcriptional corepressor CTBP(s). When phosphorylated by MAPK/ERK, MCRIP1 releases CTBP(s) resulting in transcriptional silencing of the E-cadherin gene and induction of epithelial-mesenchymal transition. The chain is Mapk-regulated corepressor-interacting protein 1 (MCRIP1) from Bos taurus (Bovine).